The chain runs to 576 residues: 3-hydroxy-3-methylglutaryl coenzyme A reductase 1 (576 aa).

The disordered stretch occupies residues 1–35 (MDSRRRPSKPLLTSSGEVLHRKQASPVTDEDQIHR). 2 consecutive transmembrane segments (helical) span residues 42–62 (ALPL…FSVA) and 89–109 (AIVS…IDFV). E255 (charge relay system) is an active-site residue. The N-linked (GlcNAc...) asparagine glycan is linked to N319. Catalysis depends on charge relay system residues K387 and D463. A helical transmembrane segment spans residues 532–552 (LLATIVAGSVLAGELSLMSAI). H561 functions as the Proton donor in the catalytic mechanism. N565 is a glycosylation site (N-linked (GlcNAc...) asparagine).

Belongs to the HMG-CoA reductase family. In terms of tissue distribution, expressed in trichomes, leaves, flowers, roots and stems.

The protein resides in the endoplasmic reticulum membrane. The protein localises to the plastid. It is found in the chloroplast membrane. It localises to the peroxisome membrane. The catalysed reaction is (R)-mevalonate + 2 NADP(+) + CoA = (3S)-3-hydroxy-3-methylglutaryl-CoA + 2 NADPH + 2 H(+). Its pathway is metabolic intermediate biosynthesis; (R)-mevalonate biosynthesis; (R)-mevalonate from acetyl-CoA: step 3/3. Functionally, catalyzes the synthesis of mevalonate, the specific precursor of all isoprenoid compounds present in plants. Component of the triterpene saponins (e.g. ginsenosides or panaxosides) and phytosterols biosynthetic pathways. Promotes triterpenes accumulation in roots. This is 3-hydroxy-3-methylglutaryl coenzyme A reductase 1 from Cannabis sativa (Hemp).